A 370-amino-acid chain; its full sequence is Peptidoglycan glycosyltransferase MrdB (370 aa).

Transmembrane regions (helical) follow at residues 20-40 (MLLI…SASG), 50-70 (IGQI…PPRV), 75-95 (APYL…FGAI), 136-156 (SLKN…LVAA), 160-180 (LGTS…SGLS), 183-203 (LIGV…FFLM), 263-283 (FIFA…LLAL), 312-332 (LILF…LPVV), and 336-356 (LPLV…FGIV).

This sequence belongs to the SEDS family. MrdB/RodA subfamily.

It localises to the cell inner membrane. It catalyses the reaction [GlcNAc-(1-&gt;4)-Mur2Ac(oyl-L-Ala-gamma-D-Glu-L-Lys-D-Ala-D-Ala)](n)-di-trans,octa-cis-undecaprenyl diphosphate + beta-D-GlcNAc-(1-&gt;4)-Mur2Ac(oyl-L-Ala-gamma-D-Glu-L-Lys-D-Ala-D-Ala)-di-trans,octa-cis-undecaprenyl diphosphate = [GlcNAc-(1-&gt;4)-Mur2Ac(oyl-L-Ala-gamma-D-Glu-L-Lys-D-Ala-D-Ala)](n+1)-di-trans,octa-cis-undecaprenyl diphosphate + di-trans,octa-cis-undecaprenyl diphosphate + H(+). Its pathway is cell wall biogenesis; peptidoglycan biosynthesis. In terms of biological role, peptidoglycan polymerase that is essential for cell wall elongation. This is Peptidoglycan glycosyltransferase MrdB from Escherichia coli O157:H7.